We begin with the raw amino-acid sequence, 63 residues long: UPF0337 protein SERP0494 (63 aa).

Positions 1–46 (MAEDKFEQAKGNIKETVGNATDNKELEKDGKGDKASGKAKEAVENV) are disordered. Positions 22–46 (DNKELEKDGKGDKASGKAKEAVENV) are enriched in basic and acidic residues.

Belongs to the UPF0337 (CsbD) family.

The protein is UPF0337 protein SERP0494 of Staphylococcus epidermidis (strain ATCC 35984 / DSM 28319 / BCRC 17069 / CCUG 31568 / BM 3577 / RP62A).